We begin with the raw amino-acid sequence, 304 residues long: MRLPIFLDTDPGIDDAVAIAAAIFAPELDLQLMTTVAGNVSVEKTTRNALQLLHFWNAEIPLAQGAAVPLVRAPRDAASVHGESGMAGYDFVEHNRKPIGIPAFLAIRDALMRAPEPVTLVAIGPLTNIALLLSQCPECKPYIRRLVIMGGSSGRGNCTPNAEFNIAADPEAAACVFRSGIEIVMCGLDVTNQAILTPDYLATLPELNRTGKMLHALFSHYRSGSMQSGLRMHDLCAIAWLVRPDLFTLKPCFVAVETQGEFTSGTTVVDIDGCLGKPANVKVALDLDVKGFQQWVAEVLALAS.

His233 is a catalytic residue.

The protein belongs to the IUNH family. RihC subfamily.

Functionally, hydrolyzes both purine and pyrimidine ribonucleosides with a broad-substrate specificity. The sequence is that of Non-specific ribonucleoside hydrolase RihC from Shigella sonnei (strain Ss046).